A 154-amino-acid chain; its full sequence is Toxin YhaV (154 aa).

In terms of assembly, homohexamer; forms a complex with PrlF (SohA) with stoichiometry PrlF(2)-YhaV(4), possibly as a YhaV(2)-PrlF(2)-YhaV(2) complex like the MazFE complex. May dimerize in solution.

In terms of biological role, toxic component of a type II toxin-antitoxin (TA) system. Has RNase activity in vitro. Acts as a transcription factor. The YhaV/PrlF complex binds the prlF-yhaV operon, probably negatively regulating its expression. This Escherichia coli O157:H7 protein is Toxin YhaV (yhaV).